The following is a 324-amino-acid chain: Testisin (324 aa).

The N-terminal stretch at 1-21 (MGARGKTLVPLLVVVATAAMA) is a signal peptide. A propeptide spanning residues 22 to 54 (LQSTYLQVDPEKPELQEPDLLSGPCGHRTIPSR) is cleaved from the precursor. Intrachain disulfides connect Cys-46-Cys-167 and Cys-80-Cys-96. Residues 55–296 (IVGGDDAELG…HYNWIQSTMI (242 aa)) enclose the Peptidase S1 domain. Catalysis depends on charge relay system residues His-95 and Asp-147. Residues Asn-170, Asn-177, and Asn-210 are each glycosylated (N-linked (GlcNAc...) asparagine). 3 cysteine pairs are disulfide-bonded: Cys-181-Cys-254, Cys-214-Cys-233, and Cys-244-Cys-272. Ser-248 (charge relay system) is an active-site residue. Asn-283 carries an N-linked (GlcNAc...) asparagine glycan. Asn-298 carries GPI-anchor amidated asparagine lipidation. Residues 299–324 (GLLRPDPVPLLLFLTLAWASSLLRPA) constitute a propeptide, removed in mature form.

Belongs to the peptidase S1 family. In terms of tissue distribution, testis.

It is found in the cell membrane. Functionally, could regulate proteolytic events associated with testicular germ cell maturation. This Mus musculus (Mouse) protein is Testisin (Prss21).